The primary structure comprises 98 residues: Small ribosomal subunit protein bS6 (98 aa).

It belongs to the bacterial ribosomal protein bS6 family.

Its function is as follows. Binds together with bS18 to 16S ribosomal RNA. This Limosilactobacillus reuteri (strain DSM 20016) (Lactobacillus reuteri) protein is Small ribosomal subunit protein bS6.